Here is a 158-residue protein sequence, read N- to C-terminus: uncharacterized protein (158 aa).

The next 2 helical transmembrane spans lie at Leu10–Val30 and Ile137–Phe157.

Its subcellular location is the cell membrane. This is an uncharacterized protein from Bacillus subtilis (strain 168).